Here is a 276-residue protein sequence, read N- to C-terminus: NAD kinase (276 aa).

Catalysis depends on Asp-61, which acts as the Proton acceptor. NAD(+) contacts are provided by residues 61–62 (DG), 134–135 (ND), Arg-145, Lys-162, Asp-164, Val-172, 175–180 (TAYSFS), and Gln-234.

It belongs to the NAD kinase family. It depends on a divalent metal cation as a cofactor.

Its subcellular location is the cytoplasm. It carries out the reaction NAD(+) + ATP = ADP + NADP(+) + H(+). Functionally, involved in the regulation of the intracellular balance of NAD and NADP, and is a key enzyme in the biosynthesis of NADP. Catalyzes specifically the phosphorylation on 2'-hydroxyl of the adenosine moiety of NAD to yield NADP. The sequence is that of NAD kinase from Clostridium perfringens (strain 13 / Type A).